A 252-amino-acid polypeptide reads, in one-letter code: Geranylgeranylglyceryl phosphate synthase (252 aa).

Asp27 and Thr57 together coordinate Mg(2+). Residues 175–181 (YLEAGSG), 206–207 (GG), and 228–229 (GN) each bind sn-glycerol 1-phosphate.

The protein belongs to the GGGP/HepGP synthase family. Group II subfamily. It depends on Mg(2+) as a cofactor.

It is found in the cytoplasm. The enzyme catalyses sn-glycerol 1-phosphate + (2E,6E,10E)-geranylgeranyl diphosphate = sn-3-O-(geranylgeranyl)glycerol 1-phosphate + diphosphate. It participates in membrane lipid metabolism; glycerophospholipid metabolism. In terms of biological role, prenyltransferase that catalyzes the transfer of the geranylgeranyl moiety of geranylgeranyl diphosphate (GGPP) to the C3 hydroxyl of sn-glycerol-1-phosphate (G1P). This reaction is the first ether-bond-formation step in the biosynthesis of archaeal membrane lipids. This is Geranylgeranylglyceryl phosphate synthase from Metallosphaera sedula (strain ATCC 51363 / DSM 5348 / JCM 9185 / NBRC 15509 / TH2).